The sequence spans 114 residues: Ribonuclease P protein component (114 aa).

The protein belongs to the RnpA family. In terms of assembly, consists of a catalytic RNA component (M1 or rnpB) and a protein subunit.

It catalyses the reaction Endonucleolytic cleavage of RNA, removing 5'-extranucleotides from tRNA precursor.. Its function is as follows. RNaseP catalyzes the removal of the 5'-leader sequence from pre-tRNA to produce the mature 5'-terminus. It can also cleave other RNA substrates such as 4.5S RNA. The protein component plays an auxiliary but essential role in vivo by binding to the 5'-leader sequence and broadening the substrate specificity of the ribozyme. The chain is Ribonuclease P protein component from Borrelia turicatae (strain 91E135).